Here is a 685-residue protein sequence, read N- to C-terminus: Mannan-binding lectin serine protease 2 (685 aa).

The signal sequence occupies residues 1 to 19; it reads MRLLIFLGLLWSLVATLLG. One can recognise a CUB 1 domain in the interval 20 to 137; that stretch reads SKWPEPVFGR…TGFEAFYAAE (118 aa). 2 residues coordinate Ca(2+): E67 and D75. Cysteines 72 and 90 form a disulfide. The N-linked (GlcNAc...) asparagine glycan is linked to N103. 5 residues coordinate Ca(2+): D120, S122, N123, D138, and E141. One can recognise an EGF-like; calcium-binding domain in the interval 138–181; that stretch reads DVDECRVSLGDSVPCDHYCHNYLGGYYCSCRAGYVLHQNKHTCS. Cystine bridges form between C142/C156, C152/C165, C167/C180, C184/C211, and C241/C259. Ca(2+) is bound by residues N158 and G162. N158 carries the post-translational modification (3R)-3-hydroxyasparagine. The CUB 2 domain maps to 184–296; the sequence is CSGQVFTGRS…TGWKIHYTST (113 aa). N285 and N308 each carry an N-linked (GlcNAc...) asparagine glycan. Sushi domains follow at residues 298–363 and 364–431; these read RPCP…ECSI and IDCG…VCEP. 7 disulfides stabilise this stretch: C300–C348, C328–C361, C366–C411, C396–C429, C433–C552, C598–C617, and C628–C659. The Peptidase S1 domain occupies 444–683; the sequence is IVGGQPAKPG…YIPWIENIIS (240 aa). Active-site charge relay system residues include H483 and D532. An N-linked (GlcNAc...) asparagine glycan is attached at N545. S632 (charge relay system) is an active-site residue. The N-linked (GlcNAc...) asparagine glycan is linked to N641.

The protein belongs to the peptidase S1 family. As to quaternary structure, homodimer; disulfide-linked. Binds MBL2. Isoform 2 binds to MASP1. Binds SERPING1. The iron and 2-oxoglutarate dependent 3-hydroxylation of aspartate and asparagine is (R) stereospecific within EGF domains. Plasma.

The protein resides in the secreted. It carries out the reaction Selective cleavage after Arg-223 in complement component C2 (-Ser-Leu-Gly-Arg-|-Lys-Ile-Gln-Ile) and after Arg-76 in complement component C4 (-Gly-Leu-Gln-Arg-|-Ala-Leu-Glu-Ile).. In terms of biological role, serum protease that plays an important role in the activation of the complement system via mannose-binding lectin. After activation by auto-catalytic cleavage it cleaves C2 and C4, leading to their activation and to the formation of C3 convertase. The protein is Mannan-binding lectin serine protease 2 (Masp2) of Mus musculus (Mouse).